Here is a 181-residue protein sequence, read N- to C-terminus: Lysozyme A (181 aa).

The N-terminal stretch at 1–19 (MRIAFFLLVLAVIIGFAYG) is a signal peptide. A propeptide spanning residues 139 to 181 (LTDSRPLGPFNVTESEMAQLFIDHEIAMAQCEAEKTCNGFDLE) is cleaved from the precursor.

This sequence belongs to the dictyostelium lysozyme family. Contains six disulfide bonds.

The protein localises to the cytoplasmic vesicle lumen. The catalysed reaction is Hydrolysis of 1,4-beta-linkages between N-acetylmuramic acid and N-acetyl-D-glucosamine residues in a peptidoglycan.. Has antibacterial activity against the Gram-positive bacteria B.subtilis, B.megaterium and M.luteus. No antibacterial activity detected against the Gram-positive bacterium S.aureus or against the Gram-negative bacterium E.coli. Lacks chitinase activity. This is Lysozyme A from Dictyostelium discoideum (Social amoeba).